Consider the following 72-residue polypeptide: Conotoxin VnMKLT2-0221 (72 aa).

The signal sequence occupies residues 1 to 22 (MKLTCVLIVAVLFLTACQLTTA). The propeptide occupies 23–45 (ASYARSERQHPDLGSSDQNSKLT). The tract at residues 26–45 (ARSERQHPDLGSSDQNSKLT) is disordered. 3 disulfides stabilise this stretch: Cys-48-Cys-62, Cys-55-Cys-66, and Cys-61-Cys-71.

It belongs to the conotoxin O1 superfamily. As to expression, expressed by the venom duct.

The protein localises to the secreted. The chain is Conotoxin VnMKLT2-0221 from Conus ventricosus (Mediterranean cone).